Here is a 730-residue protein sequence, read N- to C-terminus: Probable G-protein coupled receptor 149 (730 aa).

Residues 1-34 lie on the Extracellular side of the membrane; the sequence is MSFFLSNLTNDSRLWKVSHNSTDLMNSPETLTLS. 3 N-linked (GlcNAc...) asparagine glycosylation sites follow: Asn-7, Asn-10, and Asn-20. The chain crosses the membrane as a helical span at residues 35-55; that stretch reads LFCLICLMTLVALVGSIFSLV. Residues 56–68 are Cytoplasmic-facing; the sequence is SLLTMQYRTVVSM. The helical transmembrane segment at 69–89 threads the bilayer; it reads LVTSWSVDDLLSVLSVAIFMV. Topologically, residues 90-108 are extracellular; the sequence is LQWPREAPGYFQSLCTTSA. An intrachain disulfide couples Cys-104 to Cys-181. The helical transmembrane segment at 109–131 threads the bilayer; sequence LLYMCQGLSSNLKATLIVFYNFY. Residues 132 to 148 lie on the Cytoplasmic side of the membrane; it reads TMHRTVVSQSSSWRSGQ. A helical membrane pass occupies residues 149–169; that stretch reads VLGVALTVWAVSLLLASLPLC. The Extracellular portion of the chain corresponds to 170–188; that stretch reads GWGVFVRTPWGCLTDCSSP. A helical transmembrane segment spans residues 189 to 209; the sequence is YVLLLFAVYASAFGLLAVLSV. The Cytoplasmic portion of the chain corresponds to 210–308; it reads PLTHQLLCSE…SFPVSLAQKR (99 aa). A helical transmembrane segment spans residues 309-329; that stretch reads FALILALTKVILWLPMMIHMV. Residues 330–340 lie on the Extracellular side of the membrane; the sequence is VKHVVGFQSLP. Residues 341 to 361 traverse the membrane as a helical segment; the sequence is VDMLSFLLTLLASTVTPVFVL. At 362 to 730 the chain is on the cytoplasmic side; it reads SKRWAHLPCG…RKREAESKGN (369 aa).

It belongs to the G-protein coupled receptor 1 family. As to expression, expressed exclusively in brain and testis.

It is found in the cell membrane. Functionally, orphan receptor. The protein is Probable G-protein coupled receptor 149 (Gpr149) of Rattus norvegicus (Rat).